A 270-amino-acid chain; its full sequence is 4-hydroxy-tetrahydrodipicolinate reductase (270 aa).

Residues 11–16 and Glu37 each bind NAD(+); that span reads GCNGRM. Arg38 contributes to the NADP(+) binding site. NAD(+) contacts are provided by residues 101–103 and 125–128; these read GTT and ASNY. His158 functions as the Proton donor/acceptor in the catalytic mechanism. His159 lines the (S)-2,3,4,5-tetrahydrodipicolinate pocket. Lys162 (proton donor) is an active-site residue. 168-169 serves as a coordination point for (S)-2,3,4,5-tetrahydrodipicolinate; it reads GT.

It belongs to the DapB family.

The protein resides in the cytoplasm. The catalysed reaction is (S)-2,3,4,5-tetrahydrodipicolinate + NAD(+) + H2O = (2S,4S)-4-hydroxy-2,3,4,5-tetrahydrodipicolinate + NADH + H(+). The enzyme catalyses (S)-2,3,4,5-tetrahydrodipicolinate + NADP(+) + H2O = (2S,4S)-4-hydroxy-2,3,4,5-tetrahydrodipicolinate + NADPH + H(+). The protein operates within amino-acid biosynthesis; L-lysine biosynthesis via DAP pathway; (S)-tetrahydrodipicolinate from L-aspartate: step 4/4. Functionally, catalyzes the conversion of 4-hydroxy-tetrahydrodipicolinate (HTPA) to tetrahydrodipicolinate. In Aeromonas salmonicida (strain A449), this protein is 4-hydroxy-tetrahydrodipicolinate reductase.